The sequence spans 272 residues: uncharacterized protein (272 aa).

The first 22 residues, 1–22 (MEYIKKIALYMSVLLLIIFIGG), serve as a signal peptide directing secretion. Cysteine 23 carries N-palmitoyl cysteine lipidation. Cysteine 23 carries the S-diacylglycerol cysteine lipid modification.

This sequence belongs to the staphylococcal tandem lipoprotein family.

It localises to the cell membrane. This is an uncharacterized protein from Staphylococcus aureus (strain MRSA252).